Consider the following 842-residue polypeptide: Protein P (842 aa).

The interval 1–177 (MPLSYQHFRR…FCGSPYSWEQ (177 aa)) is terminal protein domain (TP). The interval 178–345 (ELHHGAFLDG…YCLTHLVNLL (168 aa)) is spacer. Residues 205–271 (SRPPVGSSIQ…RHAKNIASRP (67 aa)) are disordered. Over residues 223 to 239 (GPQSQQRPLDGSQQGRS) the composition is skewed to polar residues. The interval 346 to 689 (EDWGPCTEHG…YLNLYPVARQ (344 aa)) is polymerase/reverse transcriptase domain (RT). The 244-residue stretch at 356–599 (KHHIRIPRTP…YSLNFMGYVI (244 aa)) folds into the Reverse transcriptase domain. The Mg(2+) site is built by Asp-428, Asp-550, and Asp-551.

It belongs to the hepadnaviridae P protein family.

The catalysed reaction is DNA(n) + a 2'-deoxyribonucleoside 5'-triphosphate = DNA(n+1) + diphosphate. It carries out the reaction Endonucleolytic cleavage to 5'-phosphomonoester.. With respect to regulation, activated by host HSP70 and HSP40 in vitro to be able to bind the epsilon loop of the pgRNA. Because deletion of the RNase H region renders the protein partly chaperone-independent, the chaperones may be needed indirectly to relieve occlusion of the RNA-binding site by this domain. Inhibited by several reverse-transcriptase inhibitors: Lamivudine, Adefovir and Entecavir. In terms of biological role, multifunctional enzyme that converts the viral RNA genome into dsDNA in viral cytoplasmic capsids. This enzyme displays a DNA polymerase activity that can copy either DNA or RNA templates, and a ribonuclease H (RNase H) activity that cleaves the RNA strand of RNA-DNA heteroduplexes in a partially processive 3'- to 5'-endonucleasic mode. Neo-synthesized pregenomic RNA (pgRNA) are encapsidated together with the P protein, and reverse-transcribed inside the nucleocapsid. Initiation of reverse-transcription occurs first by binding the epsilon loop on the pgRNA genome, and is initiated by protein priming, thereby the 5'-end of (-)DNA is covalently linked to P protein. Partial (+)DNA is synthesized from the (-)DNA template and generates the relaxed circular DNA (RC-DNA) genome. After budding and infection, the RC-DNA migrates in the nucleus, and is converted into a plasmid-like covalently closed circular DNA (cccDNA). The activity of P protein does not seem to be necessary for cccDNA generation, and is presumably released from (+)DNA by host nuclear DNA repair machinery. This is Protein P from Hepatitis B virus genotype E subtype ayw4 (isolate Kou) (HBV-E).